We begin with the raw amino-acid sequence, 2498 residues long: PKS-NRPS hybrid synthetase acdB (2498 aa).

Residues 34–427 form an adenylation (A) domain region; that stretch reads FEQAAHAHFD…GRADSQVKIR (394 aa). Positions 531–606 constitute a Carrier 1 domain; that stretch reads QPATELERDI…SLAGYLMDMD (76 aa). An O-(pantetheine 4'-phosphoryl)serine modification is found at Ser-566. The region spanning 627–1058 is the Ketosynthase family 3 (KS3) domain; that stretch reads SDDIAVVSMA…GTNAHVIVEE (432 aa). Residues Cys-802, His-938, and His-979 each act as for beta-ketoacyl synthase activity in the active site. The malonyl-CoA:ACP transacylase (MAT) domain stretch occupies residues 1165–1485; that stretch reads LFAGQGSQQL…EILARLHVQH (321 aa). The segment at 1739–1917 is ketoreductase (KR) domain; that stretch reads GAVLITGGLS…PAVCVAYGPL (179 aa). The 76-residue stretch at 2017 to 2092 folds into the Carrier 2 domain; sequence EILLRTIQEA…ELSRYLLPQL (76 aa). At Ser-2052 the chain carries O-(pantetheine 4'-phosphoryl)serine. Residues 2149–2378 are thioester reductase (TE) domain; that stretch reads VTGATEFVGA…FPVDYVCRTI (230 aa).

This sequence in the C-terminal section; belongs to the NRP synthetase family. It depends on pantetheine 4'-phosphate as a cofactor.

It participates in secondary metabolite biosynthesis. Functionally, PKS-NRPS hybrid synthetase; part of the gene cluster that mediates the biosynthesis of aspcandine, a pyrrolobenzazepine alkaloid. Initially, the indoleamine 2,3-dioxygenase acdA accepts L-tryptophan and performs the oxidative opening of the indole ring to yield N'-formyl-L-kynurenine, which undergoes the spontaneous deformylation reaction to provide L-kynurenine. The kynurenine 3-monooxygenase acdD then hydroxylates L-kynurenine to afford 3-hydroxy-L-kynurenine. 3-hydroxy-L-kynurenine is activated by the A domain of the NRPS-PKS acdB and subsequently loaded onto the enzyme. The KS domain conducts the decarboxylative condensation of the 3-hydroxy-L-kynurenyl and malonyl moieties, and subsequent nucleophilic attacks by the two amino groups would occur nonenzymatically at two distinct positions, achieving the chain release and the construction of the tricyclic system. Finally, a dehydration reaction completes the biosynthesis to yield aspcandine. In Aspergillus candidus, this protein is PKS-NRPS hybrid synthetase acdB.